We begin with the raw amino-acid sequence, 290 residues long: Feruloyl esterase D (290 aa).

The first 25 residues, 1-25 (MAGLHSRLTTFLLLLLSALPAIAAA), serve as a signal peptide directing secretion. The interval 260 to 280 (HGGDHNPSQRDPGQNDPFAPR) is disordered.

It belongs to the serine esterase family.

It localises to the secreted. It catalyses the reaction feruloyl-polysaccharide + H2O = ferulate + polysaccharide.. In terms of biological role, involved in degradation of plant cell walls. Hydrolyzes the feruloyl-arabinose ester bond in arabinoxylans as well as the feruloyl-galactose and feruloyl-arabinose ester bonds in pectin. Active against methyl esters of ferulate (MFA), sinapate (MSA), caffeate (MCA) and p-coumarate (MpCA). The polypeptide is Feruloyl esterase D (Neurospora crassa (strain ATCC 24698 / 74-OR23-1A / CBS 708.71 / DSM 1257 / FGSC 987)).